The following is a 194-amino-acid chain: MAIIIGIDPGSRMTGYGILQQTGDKLTYIDSGTIRTDTKEMPERLKRIFNGLTRITQHHLKYADEPIYTAIEQVFMAENPDSALKLGQARGAAIAAMVALDLEVSEYTARQIKQAVCGYGAAAKEQVQEMVCRILTLDFVPQQDAADGLACAICHAHSSHSMNKLILNSAMRGRGASKKKGRWRLTEEDLGNLR.

Residues Asp-8, Glu-72, and Asp-144 contribute to the active site. Mg(2+) is bound by residues Asp-8, Glu-72, and Asp-144.

This sequence belongs to the RuvC family. As to quaternary structure, homodimer which binds Holliday junction (HJ) DNA. The HJ becomes 2-fold symmetrical on binding to RuvC with unstacked arms; it has a different conformation from HJ DNA in complex with RuvA. In the full resolvosome a probable DNA-RuvA(4)-RuvB(12)-RuvC(2) complex forms which resolves the HJ. The cofactor is Mg(2+).

The protein localises to the cytoplasm. The catalysed reaction is Endonucleolytic cleavage at a junction such as a reciprocal single-stranded crossover between two homologous DNA duplexes (Holliday junction).. Its function is as follows. The RuvA-RuvB-RuvC complex processes Holliday junction (HJ) DNA during genetic recombination and DNA repair. Endonuclease that resolves HJ intermediates. Cleaves cruciform DNA by making single-stranded nicks across the HJ at symmetrical positions within the homologous arms, yielding a 5'-phosphate and a 3'-hydroxyl group; requires a central core of homology in the junction. The consensus cleavage sequence is 5'-(A/T)TT(C/G)-3'. Cleavage occurs on the 3'-side of the TT dinucleotide at the point of strand exchange. HJ branch migration catalyzed by RuvA-RuvB allows RuvC to scan DNA until it finds its consensus sequence, where it cleaves and resolves the cruciform DNA. The sequence is that of Crossover junction endodeoxyribonuclease RuvC from Psychrobacter cryohalolentis (strain ATCC BAA-1226 / DSM 17306 / VKM B-2378 / K5).